Consider the following 372-residue polypeptide: Mitogen-activated protein kinase kinase kinase 17 (372 aa).

The Protein kinase domain occupies 3–259 (WTRGRILGRG…ATQLLNHPFL (257 aa)). Residues 9 to 17 (LGRGSTATV) and lysine 32 contribute to the ATP site. The active-site Proton acceptor is the aspartate 126. Position 312 is a phosphoserine (serine 312).

Belongs to the protein kinase superfamily. Ser/Thr protein kinase family. Binds to MKK3.

It localises to the nucleus. The catalysed reaction is L-seryl-[protein] + ATP = O-phospho-L-seryl-[protein] + ADP + H(+). It catalyses the reaction L-threonyl-[protein] + ATP = O-phospho-L-threonyl-[protein] + ADP + H(+). Its function is as follows. Component of the abscisic acid (ABA) signaling pathway that may act as ABA signal transducer in the context of abiotic stresses. Triggers MPK7 activation in a MKK3-dependent manner. Mediates the ABA-dependent activation of the MKK3-MPK7 module. This Arabidopsis thaliana (Mouse-ear cress) protein is Mitogen-activated protein kinase kinase kinase 17.